The sequence spans 304 residues: UDP-3-O-acyl-N-acetylglucosamine deacetylase (304 aa).

Residues histidine 79, histidine 238, and aspartate 242 each contribute to the Zn(2+) site. Histidine 265 acts as the Proton donor in catalysis.

This sequence belongs to the LpxC family. Zn(2+) serves as cofactor.

It carries out the reaction a UDP-3-O-[(3R)-3-hydroxyacyl]-N-acetyl-alpha-D-glucosamine + H2O = a UDP-3-O-[(3R)-3-hydroxyacyl]-alpha-D-glucosamine + acetate. It functions in the pathway glycolipid biosynthesis; lipid IV(A) biosynthesis; lipid IV(A) from (3R)-3-hydroxytetradecanoyl-[acyl-carrier-protein] and UDP-N-acetyl-alpha-D-glucosamine: step 2/6. Its function is as follows. Catalyzes the hydrolysis of UDP-3-O-myristoyl-N-acetylglucosamine to form UDP-3-O-myristoylglucosamine and acetate, the committed step in lipid A biosynthesis. The sequence is that of UDP-3-O-acyl-N-acetylglucosamine deacetylase from Pseudoalteromonas atlantica (strain T6c / ATCC BAA-1087).